The primary structure comprises 391 residues: Arrestin-C (391 aa).

Basic and acidic residues predominate over residues 369-379; sequence ARQEPGGREES. The tract at residues 369–391 is disordered; it reads ARQEPGGREESQEALAAEGDEGS.

This sequence belongs to the arrestin family. Homodimer; disulfide-linked in response to retinal illumination. Interacts with CXCR4; the interaction is dependent on the C-terminal phosphorylation of CXCR4 and modulates the calcium ion mobilization activity of CXCR4. Interacts with GPR84.

The protein localises to the photoreceptor inner segment. It localises to the cell projection. The protein resides in the cilium. Its subcellular location is the photoreceptor outer segment. In terms of biological role, may play a role in an as yet undefined retina-specific signal transduction. Could bind to photoactivated-phosphorylated red/green opsins. In Sus scrofa (Pig), this protein is Arrestin-C (ARR3).